Consider the following 546-residue polypeptide: Light-independent protochlorophyllide reductase subunit B (546 aa).

[4Fe-4S] cluster is bound at residue D36. Catalysis depends on D287, which acts as the Proton donor. 422 to 423 is a substrate binding site; the sequence is GL. Residues 443-501 form a disordered region; it reads PSHLSAHRPTGEAVGDAVGEPPAAPRDQAAPAATLDGSAAQSDPARTTPPGAPSWEDSA.

This sequence belongs to the ChlB/BchB/BchZ family. As to quaternary structure, protochlorophyllide reductase is composed of three subunits; BchL, BchN and BchB. Forms a heterotetramer of two BchB and two BchN subunits. [4Fe-4S] cluster is required as a cofactor.

It carries out the reaction chlorophyllide a + oxidized 2[4Fe-4S]-[ferredoxin] + 2 ADP + 2 phosphate = protochlorophyllide a + reduced 2[4Fe-4S]-[ferredoxin] + 2 ATP + 2 H2O. The protein operates within porphyrin-containing compound metabolism; bacteriochlorophyll biosynthesis (light-independent). Functionally, component of the dark-operative protochlorophyllide reductase (DPOR) that uses Mg-ATP and reduced ferredoxin to reduce ring D of protochlorophyllide (Pchlide) to form chlorophyllide a (Chlide). This reaction is light-independent. The NB-protein (BchN-BchB) is the catalytic component of the complex. The protein is Light-independent protochlorophyllide reductase subunit B of Rhodospirillum rubrum (strain ATCC 11170 / ATH 1.1.1 / DSM 467 / LMG 4362 / NCIMB 8255 / S1).